Here is a 316-residue protein sequence, read N- to C-terminus: Methionyl-tRNA formyltransferase (316 aa).

114-117 (SLLP) provides a ligand contact to (6S)-5,6,7,8-tetrahydrofolate.

This sequence belongs to the Fmt family.

It catalyses the reaction L-methionyl-tRNA(fMet) + (6R)-10-formyltetrahydrofolate = N-formyl-L-methionyl-tRNA(fMet) + (6S)-5,6,7,8-tetrahydrofolate + H(+). Its function is as follows. Attaches a formyl group to the free amino group of methionyl-tRNA(fMet). The formyl group appears to play a dual role in the initiator identity of N-formylmethionyl-tRNA by promoting its recognition by IF2 and preventing the misappropriation of this tRNA by the elongation apparatus. This is Methionyl-tRNA formyltransferase from Aromatoleum aromaticum (strain DSM 19018 / LMG 30748 / EbN1) (Azoarcus sp. (strain EbN1)).